The following is a 152-amino-acid chain: MFRGATQINLDSKGRLTVPTRYRAMLNEESQGQMVCTIDLHQPCLLLYTLSEWEIIEEKLSRLSSMNPAERRVQRLLLGHASECQMDSAGRLLLANTLRQHAGLVKEVMLVGQFNKFELWDEQAWYQQVKDDIAAEQSTQEPLSVRLQELSL.

2 SpoVT-AbrB domains span residues 5-52 (ATQI…TLSE) and 81-124 (ASEC…DEQA).

It belongs to the MraZ family. As to quaternary structure, forms oligomers.

The protein localises to the cytoplasm. The protein resides in the nucleoid. In terms of biological role, negatively regulates its own expression and that of the subsequent genes in the proximal part of the division and cell wall (dcw) gene cluster. Acts by binding directly to DNA. May also regulate the expression of genes outside the dcw cluster. This Photorhabdus laumondii subsp. laumondii (strain DSM 15139 / CIP 105565 / TT01) (Photorhabdus luminescens subsp. laumondii) protein is Transcriptional regulator MraZ.